The sequence spans 182 residues: Adenylate kinase (182 aa).

12–17 (GAGKGT) is a binding site for ATP. Positions 32-61 (STGELLRKEIEMNTNLGIQVKDIMNRGELV) are NMP. Residues Thr33, Arg38, 59-61 (ELV), 85-88 (GYPR), and Gln92 each bind AMP. An LID region spans residues 126 to 132 (LRGRKDD). Position 127 (Arg127) interacts with ATP. Positions 129 and 140 each coordinate AMP. Arg168 serves as a coordination point for ATP.

The protein belongs to the adenylate kinase family. As to quaternary structure, monomer.

The protein localises to the cytoplasm. The catalysed reaction is AMP + ATP = 2 ADP. It functions in the pathway purine metabolism; AMP biosynthesis via salvage pathway; AMP from ADP: step 1/1. Catalyzes the reversible transfer of the terminal phosphate group between ATP and AMP. Plays an important role in cellular energy homeostasis and in adenine nucleotide metabolism. This Prochlorococcus marinus (strain AS9601) protein is Adenylate kinase.